The chain runs to 142 residues: Nucleoside diphosphate kinase (142 aa).

K11, F59, R87, T93, R104, and N114 together coordinate ATP. The Pros-phosphohistidine intermediate role is filled by H117.

The protein belongs to the NDK family. As to quaternary structure, homotetramer. It depends on Mg(2+) as a cofactor.

The protein resides in the cytoplasm. It catalyses the reaction a 2'-deoxyribonucleoside 5'-diphosphate + ATP = a 2'-deoxyribonucleoside 5'-triphosphate + ADP. The enzyme catalyses a ribonucleoside 5'-diphosphate + ATP = a ribonucleoside 5'-triphosphate + ADP. In terms of biological role, major role in the synthesis of nucleoside triphosphates other than ATP. The ATP gamma phosphate is transferred to the NDP beta phosphate via a ping-pong mechanism, using a phosphorylated active-site intermediate. This chain is Nucleoside diphosphate kinase, found in Aeromonas salmonicida (strain A449).